Consider the following 226-residue polypeptide: 2-C-methyl-D-erythritol 4-phosphate cytidylyltransferase (226 aa).

This sequence belongs to the IspD/TarI cytidylyltransferase family. IspD subfamily.

It catalyses the reaction 2-C-methyl-D-erythritol 4-phosphate + CTP + H(+) = 4-CDP-2-C-methyl-D-erythritol + diphosphate. Its pathway is isoprenoid biosynthesis; isopentenyl diphosphate biosynthesis via DXP pathway; isopentenyl diphosphate from 1-deoxy-D-xylulose 5-phosphate: step 2/6. Catalyzes the formation of 4-diphosphocytidyl-2-C-methyl-D-erythritol from CTP and 2-C-methyl-D-erythritol 4-phosphate (MEP). In Prochlorococcus marinus (strain SARG / CCMP1375 / SS120), this protein is 2-C-methyl-D-erythritol 4-phosphate cytidylyltransferase.